The following is a 683-amino-acid chain: DNA ligase (683 aa).

NAD(+) contacts are provided by residues 44-48 (DAEYD), 93-94 (SL), and Glu127. Lys129 serves as the catalytic N6-AMP-lysine intermediate. Arg150, Glu187, Lys302, and Lys326 together coordinate NAD(+). Zn(2+)-binding residues include Cys420, Cys423, Cys438, and Cys444. The region spanning 601–683 (RVGGRLAGLT…SKLLATGGNQ (83 aa)) is the BRCT domain.

It belongs to the NAD-dependent DNA ligase family. LigA subfamily. The cofactor is Mg(2+). Requires Mn(2+) as cofactor.

The catalysed reaction is NAD(+) + (deoxyribonucleotide)n-3'-hydroxyl + 5'-phospho-(deoxyribonucleotide)m = (deoxyribonucleotide)n+m + AMP + beta-nicotinamide D-nucleotide.. DNA ligase that catalyzes the formation of phosphodiester linkages between 5'-phosphoryl and 3'-hydroxyl groups in double-stranded DNA using NAD as a coenzyme and as the energy source for the reaction. It is essential for DNA replication and repair of damaged DNA. The polypeptide is DNA ligase (Trichlorobacter lovleyi (strain ATCC BAA-1151 / DSM 17278 / SZ) (Geobacter lovleyi)).